Consider the following 260-residue polypeptide: Cell division protein FtsQ (260 aa).

Topologically, residues 1–26 (MINKVLLEGQRITRSPQVKQHACGAS) are cytoplasmic. The chain crosses the membrane as a helical span at residues 27 to 47 (FFLVVLLLIGGLLYSTISWMW). Topologically, residues 48-260 (DEQRLPLSKL…QELTQEKNDD (213 aa)) are periplasmic. In terms of domain architecture, POTRA spans 52–122 (LPLSKLVLQG…DTIKVYLTEY (71 aa)).

Belongs to the FtsQ/DivIB family. FtsQ subfamily. Part of a complex composed of FtsB, FtsL and FtsQ.

It localises to the cell inner membrane. In terms of biological role, essential cell division protein. May link together the upstream cell division proteins, which are predominantly cytoplasmic, with the downstream cell division proteins, which are predominantly periplasmic. May control correct divisome assembly. The sequence is that of Cell division protein FtsQ from Vibrio cholerae serotype O1 (strain ATCC 39315 / El Tor Inaba N16961).